Reading from the N-terminus, the 548-residue chain is Membrane protein insertase YidC (548 aa).

The helical transmembrane segment at 6-26 threads the bilayer; it reads NLLVIALLFVSFMIWQAWEQD. A disordered region spans residues 28 to 58; that stretch reads NPQPQQQQTTQTTTTAAGSAADQGVPASGQG. Low complexity predominate over residues 29-42; the sequence is PQPQQQQTTQTTTT. The next 4 helical transmembrane spans lie at 350-370, 420-440, 458-478, and 499-519; these read FLGN…GIMY, LGGC…YYML, LSAQ…MFFI, and PVIF…YYIV.

This sequence belongs to the OXA1/ALB3/YidC family. Type 1 subfamily. In terms of assembly, interacts with the Sec translocase complex via SecD. Specifically interacts with transmembrane segments of nascent integral membrane proteins during membrane integration.

The protein localises to the cell inner membrane. Required for the insertion and/or proper folding and/or complex formation of integral membrane proteins into the membrane. Involved in integration of membrane proteins that insert both dependently and independently of the Sec translocase complex, as well as at least some lipoproteins. Aids folding of multispanning membrane proteins. This Enterobacter sp. (strain 638) protein is Membrane protein insertase YidC.